We begin with the raw amino-acid sequence, 448 residues long: Tryptophan dimethylallyltransferase 1 (448 aa).

L-tryptophan-binding positions include 80 to 81 (IL) and glutamate 89. The substrate site is built by arginine 100, lysine 186, and tyrosine 188. L-tryptophan contacts are provided by tyrosine 190 and arginine 251. Positions 264, 266, 268, 350, 352, 416, and 420 each coordinate substrate.

It belongs to the tryptophan dimethylallyltransferase family. In terms of assembly, homodimer.

The catalysed reaction is L-tryptophan + dimethylallyl diphosphate = 4-(3-methylbut-2-enyl)-L-tryptophan + diphosphate. Its pathway is alkaloid biosynthesis; ergot alkaloid biosynthesis. Functionally, catalyzes the first step of ergot alkaloid biosynthesis. Ergot alkaloids, which are produced by endophyte fungi, can enhance plant host fitness, but also cause livestock toxicosis to host plants. The chain is Tryptophan dimethylallyltransferase 1 (dmaW1) from Epichloe coenophiala (Tall fescue endophyte fungus).